Reading from the N-terminus, the 248-residue chain is DNA repair protein RecO (248 aa).

The protein belongs to the RecO family.

Functionally, involved in DNA repair and RecF pathway recombination. In Chelativorans sp. (strain BNC1), this protein is DNA repair protein RecO.